The following is a 234-amino-acid chain: Glucosamine-6-phosphate deaminase (234 aa).

D63 serves as the catalytic Proton acceptor; for enolization step. Residue N129 is the For ring-opening step of the active site. H131 functions as the Proton acceptor; for ring-opening step in the catalytic mechanism. E136 serves as the catalytic For ring-opening step.

It belongs to the glucosamine/galactosamine-6-phosphate isomerase family. NagB subfamily.

The enzyme catalyses alpha-D-glucosamine 6-phosphate + H2O = beta-D-fructose 6-phosphate + NH4(+). Its pathway is amino-sugar metabolism; N-acetylneuraminate degradation; D-fructose 6-phosphate from N-acetylneuraminate: step 5/5. Its function is as follows. Catalyzes the reversible isomerization-deamination of glucosamine 6-phosphate (GlcN6P) to form fructose 6-phosphate (Fru6P) and ammonium ion. The protein is Glucosamine-6-phosphate deaminase of Listeria innocua serovar 6a (strain ATCC BAA-680 / CLIP 11262).